The primary structure comprises 304 residues: MTTLRIATRKSPLALWQSEHVAAALRQHHPGLEVVLVPMSTRGDEMLDRSLAAIGGKGLFLKELELAMLRGEADCAVHSLKDVPMELDAPFVLPAILERGDPADALVSNLYASLQALPLGARVGTSSLRRQAQLRAARPDLELIDLRGNVNTRLAKLDNGGYDAIVLACAGLQRLGLEARISARLDAPEWLPAPAQGAVAVECRGDDARIYSLLAVLDAGRTRACVEAERAMNRALHGSCHVPVAAFARWEGQGLFLQGMVGSASDGRLIHADAHGSAEDTEALGRRVAQGLFDKGAAQLLAEL.

The residue at position 240 (cysteine 240) is an S-(dipyrrolylmethanemethyl)cysteine.

This sequence belongs to the HMBS family. Monomer. Dipyrromethane serves as cofactor.

The catalysed reaction is 4 porphobilinogen + H2O = hydroxymethylbilane + 4 NH4(+). Its pathway is porphyrin-containing compound metabolism; protoporphyrin-IX biosynthesis; coproporphyrinogen-III from 5-aminolevulinate: step 2/4. Tetrapolymerization of the monopyrrole PBG into the hydroxymethylbilane pre-uroporphyrinogen in several discrete steps. This chain is Porphobilinogen deaminase, found in Xanthomonas euvesicatoria pv. vesicatoria (strain 85-10) (Xanthomonas campestris pv. vesicatoria).